Reading from the N-terminus, the 74-residue chain is uncharacterized protein (74 aa).

This is an uncharacterized protein from Escherichia coli (strain K12).